Reading from the N-terminus, the 230-residue chain is Increased recombination centers protein 19 (230 aa).

It belongs to the IRC19 family.

Involved in sporulation and maintenance of the mitochondrial DNA. Is probably involved in a pathway contributing to genomic integrity. The protein is Increased recombination centers protein 19 (IRC19) of Saccharomyces cerevisiae (strain AWRI1631) (Baker's yeast).